The following is a 195-amino-acid chain: Recombination protein RecR (195 aa).

A C4-type zinc finger spans residues 53-68 (CTICHNLDTISPCSIC). The Toprim domain maps to 76–171 (SIICVVEELG…KVTRLACGIP (96 aa)).

It belongs to the RecR family.

May play a role in DNA repair. It seems to be involved in an RecBC-independent recombinational process of DNA repair. It may act with RecF and RecO. This Anaplasma marginale (strain St. Maries) protein is Recombination protein RecR.